Consider the following 196-residue polypeptide: Rac-like GTP-binding protein RAC13 (196 aa).

13 to 20 (GDGAVGKT) contributes to the GTP binding site. An Effector region motif is present at residues 35 to 43 (YVPTVFDNF). GTP contacts are provided by residues 60–64 (DTAGQ) and 118–121 (TKLD). Cysteine 193 is subject to Cysteine methyl ester. Residue cysteine 193 is the site of S-geranylgeranyl cysteine attachment. A propeptide spans 194–196 (AFL) (removed in mature form).

Belongs to the small GTPase superfamily. Rho family.

It is found in the cytoplasm. The protein localises to the membrane. Its function is as follows. Could participate in a signal transduction pathway that controls cytoskeletal organization. Functionally, inactive GDP-bound Rho GTPases reside in the cytosol, are found in a complex with Rho GDP-dissociation inhibitors (Rho GDIs), and are released from the GDI protein in order to translocate to membranes upon activation. The protein is Rac-like GTP-binding protein RAC13 (RAC13) of Gossypium hirsutum (Upland cotton).